We begin with the raw amino-acid sequence, 329 residues long: Biotin synthase (329 aa).

The Radical SAM core domain occupies 36–260 (GEIQLCTLLS…VAVARITMPK (225 aa)). The [4Fe-4S] cluster site is built by C51, C55, and C58. C95, C126, C186, and R264 together coordinate [2Fe-2S] cluster.

It belongs to the radical SAM superfamily. Biotin synthase family. In terms of assembly, homodimer. It depends on [4Fe-4S] cluster as a cofactor. Requires [2Fe-2S] cluster as cofactor.

It catalyses the reaction (4R,5S)-dethiobiotin + (sulfur carrier)-SH + 2 reduced [2Fe-2S]-[ferredoxin] + 2 S-adenosyl-L-methionine = (sulfur carrier)-H + biotin + 2 5'-deoxyadenosine + 2 L-methionine + 2 oxidized [2Fe-2S]-[ferredoxin]. It functions in the pathway cofactor biosynthesis; biotin biosynthesis; biotin from 7,8-diaminononanoate: step 2/2. Functionally, catalyzes the conversion of dethiobiotin (DTB) to biotin by the insertion of a sulfur atom into dethiobiotin via a radical-based mechanism. This chain is Biotin synthase, found in Sphingopyxis alaskensis (strain DSM 13593 / LMG 18877 / RB2256) (Sphingomonas alaskensis).